A 218-amino-acid chain; its full sequence is Cytochrome b6 (218 aa).

The helical transmembrane segment at 35-55 (IFYCLGGITLVCFLIQFATGF) threads the bilayer. Cys38 is a binding site for heme c. Residues His89 and His103 each coordinate heme b. 3 helical membrane passes run 93-113 (ASMM…TGGF), 119-139 (LTWV…VTGY), and 189-209 (LHTF…FLMI). Residues His190 and His205 each coordinate heme b.

It belongs to the cytochrome b family. PetB subfamily. The 4 large subunits of the cytochrome b6-f complex are cytochrome b6, subunit IV (17 kDa polypeptide, PetD), cytochrome f and the Rieske protein, while the 4 small subunits are PetG, PetL, PetM and PetN. The complex functions as a dimer. It depends on heme b as a cofactor. Heme c serves as cofactor.

It is found in the cellular thylakoid membrane. Functionally, component of the cytochrome b6-f complex, which mediates electron transfer between photosystem II (PSII) and photosystem I (PSI), cyclic electron flow around PSI, and state transitions. The sequence is that of Cytochrome b6 from Prochlorococcus marinus (strain MIT 9211).